Reading from the N-terminus, the 144-residue chain is Large ribosomal subunit protein uL16 (144 aa).

Belongs to the universal ribosomal protein uL16 family. As to quaternary structure, part of the 50S ribosomal subunit.

Binds 23S rRNA and is also seen to make contacts with the A and possibly P site tRNAs. The protein is Large ribosomal subunit protein uL16 of Levilactobacillus brevis (strain ATCC 367 / BCRC 12310 / CIP 105137 / JCM 1170 / LMG 11437 / NCIMB 947 / NCTC 947) (Lactobacillus brevis).